The sequence spans 91 residues: Probable Fe(2+)-trafficking protein (91 aa).

The protein belongs to the Fe(2+)-trafficking protein family.

Could be a mediator in iron transactions between iron acquisition and iron-requiring processes, such as synthesis and/or repair of Fe-S clusters in biosynthetic enzymes. The chain is Probable Fe(2+)-trafficking protein from Actinobacillus pleuropneumoniae serotype 5b (strain L20).